A 338-amino-acid polypeptide reads, in one-letter code: Phenylalanine--tRNA ligase alpha subunit (338 aa).

Glutamate 253 contributes to the Mg(2+) binding site.

The protein belongs to the class-II aminoacyl-tRNA synthetase family. Phe-tRNA synthetase alpha subunit type 1 subfamily. Tetramer of two alpha and two beta subunits. Mg(2+) is required as a cofactor.

It is found in the cytoplasm. The catalysed reaction is tRNA(Phe) + L-phenylalanine + ATP = L-phenylalanyl-tRNA(Phe) + AMP + diphosphate + H(+). This chain is Phenylalanine--tRNA ligase alpha subunit, found in Geobacter metallireducens (strain ATCC 53774 / DSM 7210 / GS-15).